The sequence spans 143 residues: Large ribosomal subunit protein uL11 (143 aa).

This sequence belongs to the universal ribosomal protein uL11 family. In terms of assembly, part of the ribosomal stalk of the 50S ribosomal subunit. Interacts with L10 and the large rRNA to form the base of the stalk. L10 forms an elongated spine to which L12 dimers bind in a sequential fashion forming a multimeric L10(L12)X complex. One or more lysine residues are methylated.

In terms of biological role, forms part of the ribosomal stalk which helps the ribosome interact with GTP-bound translation factors. The sequence is that of Large ribosomal subunit protein uL11 from Clavibacter sepedonicus (Clavibacter michiganensis subsp. sepedonicus).